Here is a 442-residue protein sequence, read N- to C-terminus: tRNA modification GTPase MnmE (442 aa).

(6S)-5-formyl-5,6,7,8-tetrahydrofolate contacts are provided by Arg23, Glu82, and Lys121. The TrmE-type G domain occupies 215–364 (GTSLILAGKP…VKQALIQWMQ (150 aa)). Position 225 (Asn225) interacts with K(+). GTP contacts are provided by residues 225–230 (NVGKSS), 244–250 (THIPGTT), 269–272 (DTAG), and 325–328 (NKAD). Ser229 contributes to the Mg(2+) binding site. The K(+) site is built by Thr244, Ile246, and Thr249. Thr250 is a Mg(2+) binding site. Lys442 provides a ligand contact to (6S)-5-formyl-5,6,7,8-tetrahydrofolate.

Belongs to the TRAFAC class TrmE-Era-EngA-EngB-Septin-like GTPase superfamily. TrmE GTPase family. As to quaternary structure, homodimer. Heterotetramer of two MnmE and two MnmG subunits. Requires K(+) as cofactor.

The protein resides in the cytoplasm. Functionally, exhibits a very high intrinsic GTPase hydrolysis rate. Involved in the addition of a carboxymethylaminomethyl (cmnm) group at the wobble position (U34) of certain tRNAs, forming tRNA-cmnm(5)s(2)U34. The protein is tRNA modification GTPase MnmE of Chlamydia pneumoniae (Chlamydophila pneumoniae).